Here is a 155-residue protein sequence, read N- to C-terminus: SsrA-binding protein (155 aa).

It belongs to the SmpB family.

The protein resides in the cytoplasm. Required for rescue of stalled ribosomes mediated by trans-translation. Binds to transfer-messenger RNA (tmRNA), required for stable association of tmRNA with ribosomes. tmRNA and SmpB together mimic tRNA shape, replacing the anticodon stem-loop with SmpB. tmRNA is encoded by the ssrA gene; the 2 termini fold to resemble tRNA(Ala) and it encodes a 'tag peptide', a short internal open reading frame. During trans-translation Ala-aminoacylated tmRNA acts like a tRNA, entering the A-site of stalled ribosomes, displacing the stalled mRNA. The ribosome then switches to translate the ORF on the tmRNA; the nascent peptide is terminated with the 'tag peptide' encoded by the tmRNA and targeted for degradation. The ribosome is freed to recommence translation, which seems to be the essential function of trans-translation. This is SsrA-binding protein from Bordetella parapertussis (strain 12822 / ATCC BAA-587 / NCTC 13253).